A 140-amino-acid polypeptide reads, in one-letter code: uncharacterized protein (140 aa).

A disordered region spans residues 80–115; it reads KNGTRRHALPSPLEGSFQPGRQIPPPQTPSTDPQTL.

This is an uncharacterized protein from Homo sapiens (Human).